A 271-amino-acid polypeptide reads, in one-letter code: Elongation factor Ts (271 aa).

Residues 76–79 (TDFV) form an involved in Mg(2+) ion dislocation from EF-Tu region.

This sequence belongs to the EF-Ts family.

It is found in the cytoplasm. Functionally, associates with the EF-Tu.GDP complex and induces the exchange of GDP to GTP. It remains bound to the aminoacyl-tRNA.EF-Tu.GTP complex up to the GTP hydrolysis stage on the ribosome. The polypeptide is Elongation factor Ts (Mycobacterium tuberculosis (strain ATCC 25177 / H37Ra)).